A 235-amino-acid polypeptide reads, in one-letter code: MLKLENLTYRYEHLMMRFDLHIQAGERIAILGPSGAGKSTLLNLIAGFQTAEKGSLWLNGENHTSTSPAQRPVSMLFQENNLFSHLTIEQNIGLGLHPGLRLNSTQKQTLQQIVSQVSLEDCLPRLPAQLSGGQRQRAALARCLVRQQPILLLDEPFSALDPALRNEMLVLLEQVCHERQLTLLMVSHNLDDAARIADRALLIVDGNIHYDGLTNTLVAGTVPEAAILGMKTDAI.

In terms of domain architecture, ABC transporter spans 2–230 (LKLENLTYRY…TVPEAAILGM (229 aa)). Position 32–39 (32–39 (GPSGAGKS)) interacts with ATP.

This sequence belongs to the ABC transporter superfamily. Thiamine importer (TC 3.A.1.19.1) family. The complex is composed of two ATP-binding proteins (ThiQ), two transmembrane proteins (ThiP) and a solute-binding protein (ThiB).

The protein resides in the cell inner membrane. It carries out the reaction thiamine(out) + ATP + H2O = thiamine(in) + ADP + phosphate + H(+). Functionally, part of the ABC transporter complex ThiBPQ involved in thiamine import. Responsible for energy coupling to the transport system. The chain is Thiamine import ATP-binding protein ThiQ from Photorhabdus laumondii subsp. laumondii (strain DSM 15139 / CIP 105565 / TT01) (Photorhabdus luminescens subsp. laumondii).